Reading from the N-terminus, the 263-residue chain is Purine nucleoside phosphorylase SAS1121 (263 aa).

Zn(2+) contacts are provided by histidine 79, cysteine 124, and histidine 141.

This sequence belongs to the purine nucleoside phosphorylase YfiH/LACC1 family. In terms of assembly, homodimer. The cofactor is Cu(2+). Zn(2+) is required as a cofactor.

The enzyme catalyses adenosine + phosphate = alpha-D-ribose 1-phosphate + adenine. It catalyses the reaction S-methyl-5'-thioadenosine + phosphate = 5-(methylsulfanyl)-alpha-D-ribose 1-phosphate + adenine. The catalysed reaction is inosine + phosphate = alpha-D-ribose 1-phosphate + hypoxanthine. It carries out the reaction adenosine + H2O + H(+) = inosine + NH4(+). Its function is as follows. Purine nucleoside enzyme that catalyzes the phosphorolysis of adenosine and inosine nucleosides, yielding D-ribose 1-phosphate and the respective free bases, adenine and hypoxanthine. Also catalyzes the phosphorolysis of S-methyl-5'-thioadenosine into adenine and S-methyl-5-thio-alpha-D-ribose 1-phosphate. Also has adenosine deaminase activity. This is Purine nucleoside phosphorylase SAS1121 from Staphylococcus aureus (strain MSSA476).